The sequence spans 378 residues: Carbamoyl phosphate synthase small chain (378 aa).

The CPSase stretch occupies residues 1-189; that stretch reads MTKPAILALA…DSHPTIDAAD (189 aa). L-glutamine is bound by residues Ser47, Gly241, and Gly243. Positions 193-378 constitute a Glutamine amidotransferase type-1 domain; sequence HVVAFDYGVK…RFTDAMAKRR (186 aa). The active-site Nucleophile is the Cys269. Positions 270, 273, 311, 313, and 314 each coordinate L-glutamine. Residues His353 and Glu355 contribute to the active site.

The protein belongs to the CarA family. Composed of two chains; the small (or glutamine) chain promotes the hydrolysis of glutamine to ammonia, which is used by the large (or ammonia) chain to synthesize carbamoyl phosphate. Tetramer of heterodimers (alpha,beta)4.

The enzyme catalyses hydrogencarbonate + L-glutamine + 2 ATP + H2O = carbamoyl phosphate + L-glutamate + 2 ADP + phosphate + 2 H(+). It catalyses the reaction L-glutamine + H2O = L-glutamate + NH4(+). It functions in the pathway amino-acid biosynthesis; L-arginine biosynthesis; carbamoyl phosphate from bicarbonate: step 1/1. It participates in pyrimidine metabolism; UMP biosynthesis via de novo pathway; (S)-dihydroorotate from bicarbonate: step 1/3. Small subunit of the glutamine-dependent carbamoyl phosphate synthetase (CPSase). CPSase catalyzes the formation of carbamoyl phosphate from the ammonia moiety of glutamine, carbonate, and phosphate donated by ATP, constituting the first step of 2 biosynthetic pathways, one leading to arginine and/or urea and the other to pyrimidine nucleotides. The small subunit (glutamine amidotransferase) binds and cleaves glutamine to supply the large subunit with the substrate ammonia. This chain is Carbamoyl phosphate synthase small chain, found in Pseudomonas putida (strain ATCC 47054 / DSM 6125 / CFBP 8728 / NCIMB 11950 / KT2440).